The chain runs to 217 residues: MRVILLGPPGAGKGTQAVKIAKEFDIPHISTGDIFRQNLRDNTDLGKLAKEYMDKGLLVPDEVTNKIVEDRLEKDDCQKGFLLDGYPRNVAQAEELDRFLHDKGIHLDCVLNIEVDREALIERITGRRVCPNCGATYHIKTSPPAVDNVCDKCGAQLIQRSDDKLESVVKRLEVYESQTKPLIEYYTKKNTLVNIDGNKSVEEVFEDIKKALGDRGK.

ATP is bound at residue 10 to 15 (GAGKGT). The segment at 30–59 (STGDIFRQNLRDNTDLGKLAKEYMDKGLLV) is NMP. AMP is bound by residues threonine 31, arginine 36, 57 to 59 (LLV), 85 to 88 (GYPR), and glutamine 92. Residues 126-163 (GRRVCPNCGATYHIKTSPPAVDNVCDKCGAQLIQRSDD) form an LID region. Arginine 127 contributes to the ATP binding site. Zn(2+) contacts are provided by cysteine 130 and cysteine 133. 136–137 (TY) contacts ATP. Zn(2+) contacts are provided by cysteine 150 and cysteine 153. Positions 160 and 171 each coordinate AMP. An ATP-binding site is contributed by lysine 199.

It belongs to the adenylate kinase family. In terms of assembly, monomer.

Its subcellular location is the cytoplasm. The enzyme catalyses AMP + ATP = 2 ADP. The protein operates within purine metabolism; AMP biosynthesis via salvage pathway; AMP from ADP: step 1/1. Catalyzes the reversible transfer of the terminal phosphate group between ATP and AMP. Plays an important role in cellular energy homeostasis and in adenine nucleotide metabolism. This chain is Adenylate kinase, found in Thermoanaerobacter pseudethanolicus (strain ATCC 33223 / 39E) (Clostridium thermohydrosulfuricum).